Reading from the N-terminus, the 131-residue chain is Small ribosomal subunit protein uS8 (131 aa).

This sequence belongs to the universal ribosomal protein uS8 family. In terms of assembly, part of the 30S ribosomal subunit. Contacts proteins S5 and S12.

In terms of biological role, one of the primary rRNA binding proteins, it binds directly to 16S rRNA central domain where it helps coordinate assembly of the platform of the 30S subunit. This Chlorobium phaeobacteroides (strain DSM 266 / SMG 266 / 2430) protein is Small ribosomal subunit protein uS8.